The primary structure comprises 211 residues: Pyruvate dehydrogenase E1 component subunit beta, mitochondrial (211 aa).

Tyrosine 31 is modified (phosphotyrosine). K(+) is bound by residues isoleucine 48, alanine 96, isoleucine 97, aspartate 99, and asparagine 101.

In terms of assembly, heterotetramer of two PDHA1 and two PDHB subunits. The heterotetramer interacts with DLAT, and is part of the multimeric pyruvate dehydrogenase complex that contains multiple copies of pyruvate dehydrogenase (E1), dihydrolipoamide acetyltransferase (DLAT, E2) and lipoamide dehydrogenase (DLD, E3). These subunits are bound to an inner core composed of about 48 DLAT and 12 PDHX molecules. Interacts with DLAT. Thiamine diphosphate is required as a cofactor.

Its subcellular location is the mitochondrion matrix. It catalyses the reaction N(6)-[(R)-lipoyl]-L-lysyl-[protein] + pyruvate + H(+) = N(6)-[(R)-S(8)-acetyldihydrolipoyl]-L-lysyl-[protein] + CO2. The pyruvate dehydrogenase complex catalyzes the overall conversion of pyruvate to acetyl-CoA and CO(2), and thereby links the glycolytic pathway to the tricarboxylic cycle. The sequence is that of Pyruvate dehydrogenase E1 component subunit beta, mitochondrial from Mesocricetus auratus (Golden hamster).